The following is a 309-amino-acid chain: Probable L,D-transpeptidase ErfK/SrfK (309 aa).

A signal peptide spans 1-21; the sequence is MRRITPFFPFFVLLVSHFSLA. The L,D-TPase catalytic domain occupies 96 to 231; it reads EGIVVNVAEM…VPVGTRVQII (136 aa). His191 acts as the Proton donor/acceptor in catalysis. Cys207 serves as the catalytic Nucleophile.

It belongs to the YkuD family.

The protein resides in the periplasm. It participates in cell wall biogenesis; peptidoglycan biosynthesis. This chain is Probable L,D-transpeptidase ErfK/SrfK (erfK), found in Salmonella typhimurium (strain LT2 / SGSC1412 / ATCC 700720).